Consider the following 78-residue polypeptide: uncharacterized protein (78 aa).

The chain crosses the membrane as a helical span at residues 21–43; it reads SPFLFGAPLVGGLLGGFLGSALF.

It localises to the membrane. This is an uncharacterized protein from Bacillus subtilis (strain 168).